The primary structure comprises 338 residues: uncharacterized protein (338 aa).

The first 29 residues, 1–29, serve as a signal peptide directing secretion; the sequence is MIKQLYKNITICSLAISTALTVFPATSYA.

Belongs to the aerolysin family.

This is an uncharacterized protein from Staphylococcus aureus (strain Mu50 / ATCC 700699).